Consider the following 433-residue polypeptide: Histidine--tRNA ligase (433 aa).

It belongs to the class-II aminoacyl-tRNA synthetase family. In terms of assembly, homodimer.

Its subcellular location is the cytoplasm. It carries out the reaction tRNA(His) + L-histidine + ATP = L-histidyl-tRNA(His) + AMP + diphosphate + H(+). This Blochmanniella floridana protein is Histidine--tRNA ligase.